The primary structure comprises 463 residues: Pentatricopeptide repeat-containing protein At2g17670 (463 aa).

Positions 1 to 63 are disordered; sequence MGKVPSSFRS…PSLRNPFKSP (63 aa). PPR repeat units follow at residues 121 to 157, 158 to 192, 193 to 223, 229 to 263, 264 to 298, 299 to 333, 334 to 368, 369 to 403, and 404 to 438; these read GRSTFLILLSHACRAPDSSISNVHRVLNLMVNNGLEP, DQVTTDIAVRSLCETGRVDEAKDLMKELTEKHSPP, DTYTYNFLLKHLCKCKDLHVVYEFVDEMRDD, DLVSFTILIDNVCNSKNLREAMYLVSKLGNAGFKP, DCFLYNTIMKGFCTLSKGSEAVGVYKKMKEEGVEP, DQITYNTLIFGLSKAGRVEEARMYLKTMVDAGYEP, DTATYTSLMNGMCRKGESLGALSLLEEMEARGCAP, NDCTYNTLLHGLCKARLMDKGMELYEMMKSSGVKL, and ESNGYATLVRSLVKSGKVAEAYEVFDYAVDSKSLS.

Belongs to the PPR family. P subfamily.

In Arabidopsis thaliana (Mouse-ear cress), this protein is Pentatricopeptide repeat-containing protein At2g17670.